The following is a 410-amino-acid chain: Neuroserpin (410 aa).

An N-terminal signal peptide occupies residues 1 to 16 (MTYLELLALLALQSVV). N-linked (GlcNAc...) asparagine glycosylation is found at Asn-157, Asn-321, and Asn-401. Ser-403 carries O-linked (Xyl...) (chondroitin sulfate) serine glycosylation.

The protein belongs to the serpin family. In terms of tissue distribution, detected in neurons in embryonic brain cortex (at protein level). During embryonic development mostly expressed in CNS. In adult expressed in brain and much less in spinal cord, heart, kidney and testis.

It is found in the secreted. The protein resides in the cytoplasmic vesicle. Its subcellular location is the secretory vesicle lumen. The protein localises to the perikaryon. In terms of biological role, serine protease inhibitor that inhibits plasminogen activators and plasmin but not thrombin. May be involved in the formation or reorganization of synaptic connections as well as for synaptic plasticity in the adult nervous system. May protect neurons from cell damage by tissue-type plasminogen activator. The chain is Neuroserpin (Serpini1) from Mus musculus (Mouse).